A 232-amino-acid chain; its full sequence is Enolase-phosphatase E1 (232 aa).

It belongs to the HAD-like hydrolase superfamily. MasA/MtnC family. As to quaternary structure, monomer. Mg(2+) serves as cofactor.

It carries out the reaction 5-methylsulfanyl-2,3-dioxopentyl phosphate + H2O = 1,2-dihydroxy-5-(methylsulfanyl)pent-1-en-3-one + phosphate. It participates in amino-acid biosynthesis; L-methionine biosynthesis via salvage pathway; L-methionine from S-methyl-5-thio-alpha-D-ribose 1-phosphate: step 3/6. It functions in the pathway amino-acid biosynthesis; L-methionine biosynthesis via salvage pathway; L-methionine from S-methyl-5-thio-alpha-D-ribose 1-phosphate: step 4/6. Its function is as follows. Bifunctional enzyme that catalyzes the enolization of 2,3-diketo-5-methylthiopentyl-1-phosphate (DK-MTP-1-P) into the intermediate 2-hydroxy-3-keto-5-methylthiopentenyl-1-phosphate (HK-MTPenyl-1-P), which is then dephosphorylated to form the acireductone 1,2-dihydroxy-3-keto-5-methylthiopentene (DHK-MTPene). In Xanthomonas euvesicatoria pv. vesicatoria (strain 85-10) (Xanthomonas campestris pv. vesicatoria), this protein is Enolase-phosphatase E1.